Consider the following 428-residue polypeptide: Serine--tRNA ligase (428 aa).

Residue 237–239 (TAE) coordinates L-serine. ATP is bound at residue 268-270 (RSE). Glutamate 291 serves as a coordination point for L-serine. An ATP-binding site is contributed by 355–358 (EISS). Serine 390 contributes to the L-serine binding site.

The protein belongs to the class-II aminoacyl-tRNA synthetase family. Type-1 seryl-tRNA synthetase subfamily. In terms of assembly, homodimer. The tRNA molecule binds across the dimer.

The protein localises to the cytoplasm. It carries out the reaction tRNA(Ser) + L-serine + ATP = L-seryl-tRNA(Ser) + AMP + diphosphate + H(+). It catalyses the reaction tRNA(Sec) + L-serine + ATP = L-seryl-tRNA(Sec) + AMP + diphosphate + H(+). Its pathway is aminoacyl-tRNA biosynthesis; selenocysteinyl-tRNA(Sec) biosynthesis; L-seryl-tRNA(Sec) from L-serine and tRNA(Sec): step 1/1. In terms of biological role, catalyzes the attachment of serine to tRNA(Ser). Is also able to aminoacylate tRNA(Sec) with serine, to form the misacylated tRNA L-seryl-tRNA(Sec), which will be further converted into selenocysteinyl-tRNA(Sec). This Hydrogenovibrio crunogenus (strain DSM 25203 / XCL-2) (Thiomicrospira crunogena) protein is Serine--tRNA ligase.